Here is a 325-residue protein sequence, read N- to C-terminus: Zinc-type alcohol dehydrogenase-like protein C337.11 (325 aa).

It belongs to the zinc-containing alcohol dehydrogenase family. Quinone oxidoreductase subfamily.

It is found in the cytoplasm. It localises to the nucleus. The sequence is that of Zinc-type alcohol dehydrogenase-like protein C337.11 from Schizosaccharomyces pombe (strain 972 / ATCC 24843) (Fission yeast).